A 292-amino-acid chain; its full sequence is ATP synthase gamma chain (292 aa).

This sequence belongs to the ATPase gamma chain family. F-type ATPases have 2 components, CF(1) - the catalytic core - and CF(0) - the membrane proton channel. CF(1) has five subunits: alpha(3), beta(3), gamma(1), delta(1), epsilon(1). CF(0) has three main subunits: a, b and c.

It is found in the cell inner membrane. Functionally, produces ATP from ADP in the presence of a proton gradient across the membrane. The gamma chain is believed to be important in regulating ATPase activity and the flow of protons through the CF(0) complex. This Bradyrhizobium sp. (strain ORS 278) protein is ATP synthase gamma chain.